Here is a 223-residue protein sequence, read N- to C-terminus: Putative 3-methyladenine DNA glycosylase (223 aa).

The protein belongs to the DNA glycosylase MPG family.

In Pseudomonas savastanoi pv. phaseolicola (strain 1448A / Race 6) (Pseudomonas syringae pv. phaseolicola (strain 1448A / Race 6)), this protein is Putative 3-methyladenine DNA glycosylase.